A 338-amino-acid chain; its full sequence is MTQKKNKPTQKKKGLHPRNPHSQRYDFNALILSCPDLTPFVAENQFGDLSVDFSDPAAVKMLNKALLHHFYNVENWDIPPGYLCPPIPGRADYIHHIADLLAKSNEGVIPQGKHINGLDIGMGANCVYPIIGHRAYGWRFVGSDVDALSIKSAKFIVESNRSLAGGIKCRLQKKSDNIFTGIINANDIFDFTMCNPPFHASLEEATAGSERKVRNLSANAHKKGSNKKAELFAKSNTNKPVLNFGGQKAELWCPGGEDAFIQRMITESSDKPENCFWYSTLVSKKENLPALYKALKQVNAVDVRTIDMAQGQKVTRIVAWTFLSKGQQTQWREERWSA.

The disordered stretch occupies residues Met-1–His-21.

Belongs to the methyltransferase superfamily. METTL16/RlmF family.

The protein resides in the cytoplasm. It carries out the reaction adenosine(1618) in 23S rRNA + S-adenosyl-L-methionine = N(6)-methyladenosine(1618) in 23S rRNA + S-adenosyl-L-homocysteine + H(+). Functionally, specifically methylates the adenine in position 1618 of 23S rRNA. The polypeptide is Ribosomal RNA large subunit methyltransferase F (Photobacterium profundum (strain SS9)).